Reading from the N-terminus, the 224-residue chain is Paired immunoglobulin-like type 2 receptor beta (224 aa).

The first 28 residues, 1–28 (MALLISLPGGTPAMAQVLLLLSSGCLHA), serve as a signal peptide directing secretion. Over 29-195 (GNSERYNRKN…NPSLMNLGAM (167 aa)) the chain is Extracellular. N-linked (GlcNAc...) asparagine glycosylation is found at Asn-90, Asn-107, and Asn-154. Residues 196–216 (VTMLLAKVLVIVLVYGWMIFL) form a helical membrane-spanning segment. At 217–224 (RWKQRPAH) the chain is on the cytoplasmic side.

Interacts with CD99. Probably associates with DAP12. In terms of tissue distribution, widely expressed with highest levels in spleen, liver and lung. Predominantly expressed by natural killer cells, macrophages, and granulocytes and dendritic cells (BM-DC).

It localises to the membrane. Paired receptors consist of highly related activating and inhibitory receptors and are widely involved in the regulation of the immune system. PILRB is thought to act as a cellular signaling activating receptor that associates with ITAM-bearing adapter molecules on the cell surface. Seems to associate with DAP12 and is a receptor for CD99. May be involved in target cell recognition by natural killer cells and in activation of dendritic cells. The sequence is that of Paired immunoglobulin-like type 2 receptor beta (Pilrb) from Mus musculus (Mouse).